The sequence spans 151 residues: Large ribosomal subunit protein bL9 (151 aa).

The protein belongs to the bacterial ribosomal protein bL9 family.

Binds to the 23S rRNA. The chain is Large ribosomal subunit protein bL9 from Chlorobium chlorochromatii (strain CaD3).